The sequence spans 242 residues: uncharacterized protein (242 aa).

This sequence to E.coli MazG and to plasmid pIP1100 erythromycin esterase.

This is an uncharacterized protein from Streptomyces cacaoi.